The sequence spans 223 residues: 7-carboxy-7-deazaguanine synthase (223 aa).

Substrate contacts are provided by residues 12-14 (LQG) and Arg27. Positions 18 to 223 (FTGVPAIFIR…MQTHKYLNIA (206 aa)) constitute a Radical SAM core domain. Residues Cys31, Cys35, and Cys38 each contribute to the [4Fe-4S] cluster site. A Mg(2+)-binding site is contributed by Thr40. Thr92 contacts substrate. S-adenosyl-L-methionine contacts are provided by residues Gly94 and 136–138 (SPK).

This sequence belongs to the radical SAM superfamily. 7-carboxy-7-deazaguanine synthase family. In terms of assembly, homodimer. [4Fe-4S] cluster is required as a cofactor. Requires S-adenosyl-L-methionine as cofactor. The cofactor is Mg(2+).

The catalysed reaction is 6-carboxy-5,6,7,8-tetrahydropterin + H(+) = 7-carboxy-7-deazaguanine + NH4(+). Its pathway is purine metabolism; 7-cyano-7-deazaguanine biosynthesis. Functionally, catalyzes the complex heterocyclic radical-mediated conversion of 6-carboxy-5,6,7,8-tetrahydropterin (CPH4) to 7-carboxy-7-deazaguanine (CDG), a step common to the biosynthetic pathways of all 7-deazapurine-containing compounds. In Escherichia coli (strain K12), this protein is 7-carboxy-7-deazaguanine synthase.